The sequence spans 132 residues: Small ribosomal subunit protein uS8 (132 aa).

This sequence belongs to the universal ribosomal protein uS8 family. Part of the 30S ribosomal subunit. Contacts proteins S5 and S12.

One of the primary rRNA binding proteins, it binds directly to 16S rRNA central domain where it helps coordinate assembly of the platform of the 30S subunit. In Mycobacterium sp. (strain KMS), this protein is Small ribosomal subunit protein uS8.